Here is a 313-residue protein sequence, read N- to C-terminus: Beta-ketoacyl-[acyl-carrier-protein] synthase III (313 aa).

Residues Cys112 and His238 contribute to the active site. An ACP-binding region spans residues 239–243; sequence QANIR. Asn268 is a catalytic residue.

Belongs to the thiolase-like superfamily. FabH family. As to quaternary structure, homodimer.

It localises to the cytoplasm. It carries out the reaction malonyl-[ACP] + acetyl-CoA + H(+) = 3-oxobutanoyl-[ACP] + CO2 + CoA. The protein operates within lipid metabolism; fatty acid biosynthesis. Its function is as follows. Catalyzes the condensation reaction of fatty acid synthesis by the addition to an acyl acceptor of two carbons from malonyl-ACP. Catalyzes the first condensation reaction which initiates fatty acid synthesis and may therefore play a role in governing the total rate of fatty acid production. Possesses both acetoacetyl-ACP synthase and acetyl transacylase activities. Its substrate specificity determines the biosynthesis of branched-chain and/or straight-chain of fatty acids. The polypeptide is Beta-ketoacyl-[acyl-carrier-protein] synthase III (Staphylococcus saprophyticus subsp. saprophyticus (strain ATCC 15305 / DSM 20229 / NCIMB 8711 / NCTC 7292 / S-41)).